Consider the following 254-residue polypeptide: Wall-associated protein (254 aa).

The disordered stretch occupies residues 25–46 (DRVEPKEEPPKVPQAPKRDLKP).

The protein resides in the secreted. The protein localises to the cell wall. The polypeptide is Wall-associated protein (wapA') (Geobacillus stearothermophilus (Bacillus stearothermophilus)).